The primary structure comprises 733 residues: Protein psiM (733 aa).

The first 26 residues, 1-26 (MKKINNNKIFVLFLTILLYLLNITTA), serve as a signal peptide directing secretion. Asparagine 22, asparagine 65, and asparagine 96 each carry an N-linked (GlcNAc...) asparagine glycan. Residues 27-672 (QKPVSINIKI…VCQKAALVST (646 aa)) lie on the Extracellular side of the membrane. The region spanning 114-260 (NYDSDSGNYI…YDYCGVCNGD (147 aa)) is the PA14 domain. N-linked (GlcNAc...) asparagine glycosylation is found at asparagine 277, asparagine 336, asparagine 379, asparagine 428, asparagine 471, asparagine 537, asparagine 573, and asparagine 641. Residues 673–693 (AVIASVVVVGAVVLGAAIFAG) traverse the membrane as a helical segment. Residues 694-733 (KKGYDAWKTSQGNVMAASQANPLYTQSSNGGENPLYNSPT) are Cytoplasmic-facing.

It belongs to the prespore-cell-inducing factor family.

Its subcellular location is the membrane. The polypeptide is Protein psiM (psiM) (Dictyostelium discoideum (Social amoeba)).